The following is a 1003-amino-acid chain: Phosphatidylinositol 4,5-bisphosphate 5-phosphatase A (1003 aa).

Disordered stretches follow at residues 1–110 and 147–414; these read MEGQ…AAKS and AMPR…QPTC. The short motif at 6–11 is the RSXSXX motif 1 element; that stretch reads RSGSAR. Residues 11-24 show a composition bias toward low complexity; sequence RPGTRTGLGPLPGT. The residue at position 56 (Arg56) is an Asymmetric dimethylarginine; alternate. Position 56 is an omega-N-methylarginine; alternate (Arg56). Arg65 is subject to Omega-N-methylarginine. Arg76 is subject to Asymmetric dimethylarginine. Arg83 is subject to Asymmetric dimethylarginine; alternate. The residue at position 83 (Arg83) is an Omega-N-methylarginine; alternate. A compositionally biased stretch (polar residues) spans 160–174; sequence LTPTSRDQKQLSPTS. Ser171 carries the phosphoserine modification. Residues 180-196 show a composition bias toward low complexity; it reads ALATSGLSLALASQEQP. Positions 197–210 are enriched in pro residues; the sequence is PQSPSSPSPVPSPV. The span at 284–294 shows a compositional bias: basic and acidic residues; it reads ARPEAPRHSPE. 2 positions are modified to phosphoserine: Ser292 and Ser325. Over residues 338 to 348 the composition is skewed to pro residues; it reads VPPPLPKPPRS. The SH3-binding signature appears at 346 to 351; the sequence is PRSPSR. Low complexity-rich tracts occupy residues 349 to 361 and 390 to 413; these read PSRSPSRSPNRSP and QAQESPAAATTTTSPTSSWSAQPT. The RSXSXX motif 2 signature appears at 351 to 356; sequence RSPSRS. A catalytic region spans residues 422–725; it reads ITVVTWNVGT…SDHKPVAAQF (304 aa). The interval 726–837 is required for ruffle localization; the sequence is ILQFAFRDDV…IGVTEPFQIS (112 aa). Residues 839–1003 are disordered; it reads PTSESASSST…LGLEEGGLGP (165 aa). The span at 840–855 shows a compositional bias: low complexity; that stretch reads TSESASSSTDSSGTSS. 2 short sequence motifs (RSXSXX motif) span residues 871–876 and 882–887; these read RSPSPG and RSRSPG. Ser900 is subject to Phosphoserine. 2 stretches are compositionally biased toward low complexity: residues 907–919 and 927–943; these read SRSPSPQSRQLPR and SSSSRGSSEEGPSGLPG. The RSXSXX motif 5 signature appears at 908–913; sequence RSPSPQ. A Phosphoserine modification is found at Ser987.

This sequence belongs to the inositol 1,4,5-trisphosphate 5-phosphatase type II family.

The protein resides in the cytoplasm. The enzyme catalyses 1D-myo-inositol 1,4,5-trisphosphate + H2O = 1D-myo-inositol 1,4-bisphosphate + phosphate. The catalysed reaction is 1D-myo-inositol 1,3,4,5-tetrakisphosphate + H2O = 1D-myo-inositol 1,3,4-trisphosphate + phosphate. It catalyses the reaction a 1,2-diacyl-sn-glycero-3-phospho-(1D-myo-inositol-4,5-bisphosphate) + H2O = a 1,2-diacyl-sn-glycero-3-phospho-(1D-myo-inositol 4-phosphate) + phosphate. Its function is as follows. Inositol 5-phosphatase, which converts inositol 1,4,5-trisphosphate to inositol 1,4-bisphosphate. Also converts phosphatidylinositol 4,5-bisphosphate to phosphatidylinositol 4-phosphate and inositol 1,3,4,5-tetrakisphosphate to inositol 1,3,4-trisphosphate in vitro. May be involved in modulation of the function of inositol and phosphatidylinositol polyphosphate-binding proteins that are present at membranes ruffles. In Mus musculus (Mouse), this protein is Phosphatidylinositol 4,5-bisphosphate 5-phosphatase A (Inpp5j).